We begin with the raw amino-acid sequence, 126 residues long: Large ribosomal subunit protein eL32 (126 aa).

Belongs to the eukaryotic ribosomal protein eL32 family.

This is Large ribosomal subunit protein eL32 from Thermococcus onnurineus (strain NA1).